Consider the following 1818-residue polypeptide: Integrin beta-4 (1818 aa).

Positions 1–28 are cleaved as a signal peptide; that stretch reads MAGPCCSPWVKLLLLAAMLSASLPGDLA. At 29-712 the chain is on the extracellular side; it reads NRCKKAQVKS…HKKKDCPPGS (684 aa). Positions 30-74 constitute a PSI domain; the sequence is RCKKAQVKSCTECIRVDKSCAYCTDELFKERRCNTQAELLAAGCR. Disulfide bonds link C31-C49, C39-C457, C42-C62, C52-C73, C246-C289, C459-C478, C470-C481, and C483-C492. Positions 132 to 310 constitute a VWFA domain; the sequence is DLYILMDFSN…KTQDYPSVPT (179 aa). Positions 140 and 142 each coordinate Mg(2+). Ca(2+) contacts are provided by S142, D145, D146, and D177. The tract at residues 195-200 is involved in NRG1- and IGF1-binding; it reads WPNSDP. Ca(2+) is bound by residues N229, D231, P233, and E234. Mg(2+) is bound at residue E234. N328 is a glycosylation site (N-linked (GlcNAc...) asparagine). E351 lines the Ca(2+) pocket. I-EGF domains lie at 459–493, 494–539, 540–576, and 577–617; these read CELQ…KTCN, CSTG…HFCE, YDNF…RSCD, and CPLS…TTCE. The Cell attachment site signature appears at 473–475; that stretch reads RGD. N-linked (GlcNAc...) asparagine glycosylation is present at N493. 11 cysteine pairs are disulfide-bonded: C494–C522, C505–C520, C514–C525, C527–C538, C545–C559, C553–C564, C566–C575, C577–C600, C584–C598, C592–C603, and C605–C616. Residue N581 is glycosylated (N-linked (GlcNAc...) asparagine). N-linked (GlcNAc...) asparagine glycosylation is present at N619. Disulfide bonds link C628–C673, C634–C653, C637–C650, and C682–C708. N697 carries N-linked (GlcNAc...) asparagine glycosylation. The helical transmembrane segment at 713–733 threads the bilayer; the sequence is FWWLIPLLIFLLLLLALLLLL. Residues 734 to 751 are palmitoylated on several cysteines; it reads CWKYCACCKACLGLLPCC. Over 734 to 1818 the chain is Cytoplasmic; the sequence is CWKYCACCKA…THMDQQFFQT (1085 aa). At S773 the chain carries Phosphoserine. Residues 981–1086 enclose the Calx-beta domain; it reads VNITIIKEQA…QVRRFQVQLS (106 aa). The Cell attachment site signature appears at 1005-1007; it reads RGD. A phosphoserine mark is found at S1071 and S1121. Residues 1115–1137 are disordered; the sequence is INQTLSSPPPPHGDLGAPQNPNA. Fibronectin type-III domains follow at residues 1131 to 1220 and 1224 to 1323; these read APQN…THQE and EPGR…TQPK. Positions 1402–1433 are disordered; that stretch reads LSASSGRSDEDGSVAGGVEGEGSGWIRGATPR. Residues 1415-1426 are compositionally biased toward gly residues; that stretch reads VAGGVEGEGSGW. Phosphoserine is present on residues S1451, S1454, and S1470. The residue at position 1483 (T1483) is a Phosphothreonine. A Phosphoserine modification is found at S1490. T1526 bears the Phosphothreonine mark. 2 consecutive Fibronectin type-III domains span residues 1526-1621 and 1639-1735; these read TPTR…VHPQ and APGP…SQVG. At S1787 the chain carries Phosphoserine.

The protein belongs to the integrin beta chain family. In terms of assembly, heterodimer of an alpha and a beta subunit. Beta-4 associates with alpha-6. Interacts (via cytoplasmic region) with COL17A1 (via cytoplasmic region). Interacts (via cytoplasmic region) with DST isoform 3 (via N-terminus). Interacts (via cytoplasmic domain) with DST (via N-terminus). Interacts with RAC1. ITGA6:ITGB4 is found in a ternary complex with NRG1 and ERBB3. ITGA6:ITGB4 is found in a ternary complex with IGF1 and IGF1R. ITGA6:ITGB4 interacts with IGF2. Interacts with TMEM268; this interaction prevents ITGB4 degradation. Post-translationally, palmitoylated by DHHC3 at several cysteines of the membrane-proximal region, enhancing stability and cell surface expression. Palmitoylation also promotes secondary association with tertaspanins.

The protein localises to the cell membrane. It localises to the cell junction. The protein resides in the hemidesmosome. Integrin alpha-6/beta-4 is a receptor for laminin. It plays a critical structural role in the hemidesmosome of epithelial cells. Is required for the regulation of keratinocyte polarity and motility. ITGA6:ITGB4 binds to NRG1 (via EGF domain) and this binding is essential for NRG1-ERBB signaling. ITGA6:ITGB4 binds to IGF1 and this binding is essential for IGF1 signaling. ITGA6:ITGB4 binds to IGF2 and this binding is essential for IGF2 signaling. The polypeptide is Integrin beta-4 (Itgb4) (Mus musculus (Mouse)).